The following is a 211-amino-acid chain: Endo-1,4-beta-xylanase A (211 aa).

Residues 1–27 form the signal peptide; the sequence is MKVTAAFAGLLVTAFAAPVPEPVLVSR. Residues 28-210 form the GH11 domain; it reads SAGINYVQNY…GAGSASVTIS (183 aa). The Nucleophile role is filled by E106. C119 and C138 are joined by a disulfide. The active-site Proton donor is the E197.

Belongs to the glycosyl hydrolase 11 (cellulase G) family.

Its subcellular location is the secreted. It catalyses the reaction Endohydrolysis of (1-&gt;4)-beta-D-xylosidic linkages in xylans.. Its pathway is glycan degradation; xylan degradation. Its function is as follows. Endo-1,4-beta-xylanase involved in the hydrolysis of xylan, a major structural heterogeneous polysaccharide found in plant biomass representing the second most abundant polysaccharide in the biosphere, after cellulose. The sequence is that of Endo-1,4-beta-xylanase A (xynA) from Aspergillus niger.